A 222-amino-acid polypeptide reads, in one-letter code: N-(5'-phosphoribosyl)anthranilate isomerase (222 aa).

Belongs to the TrpF family.

It catalyses the reaction N-(5-phospho-beta-D-ribosyl)anthranilate = 1-(2-carboxyphenylamino)-1-deoxy-D-ribulose 5-phosphate. It functions in the pathway amino-acid biosynthesis; L-tryptophan biosynthesis; L-tryptophan from chorismate: step 3/5. This chain is N-(5'-phosphoribosyl)anthranilate isomerase, found in Prosthecochloris aestuarii (strain DSM 271 / SK 413).